The following is a 210-amino-acid chain: Ribosomal RNA small subunit methyltransferase G (210 aa).

S-adenosyl-L-methionine-binding positions include Gly-76, Met-81, 127–128, and Arg-145; that span reads VE.

The protein belongs to the methyltransferase superfamily. RNA methyltransferase RsmG family.

Its subcellular location is the cytoplasm. It carries out the reaction guanosine(527) in 16S rRNA + S-adenosyl-L-methionine = N(7)-methylguanosine(527) in 16S rRNA + S-adenosyl-L-homocysteine. Its function is as follows. Specifically methylates the N7 position of guanine in position 527 of 16S rRNA. The sequence is that of Ribosomal RNA small subunit methyltransferase G from Acinetobacter baumannii (strain SDF).